The chain runs to 424 residues: Zinc finger protein 597 (424 aa).

Residues 14–88 (ILFEDLAVYF…KYPIAAPLVP (75 aa)) form the KRAB domain. 4 C2H2-type zinc fingers span residues 156 to 178 (YKCP…QKIH), 184 to 206 (HKCG…RRIH), 212 to 234 (YKCA…MNSH), and 240 to 262 (YTCS…QKSH). Lys-300 is covalently cross-linked (Glycyl lysine isopeptide (Lys-Gly) (interchain with G-Cter in SUMO2)). 3 consecutive C2H2-type zinc fingers follow at residues 341 to 363 (LQCP…QNIH), 369 to 391 (HKCK…QKSH), and 397 to 419 (FKCT…KRTH).

This sequence belongs to the krueppel C2H2-type zinc-finger protein family.

Its subcellular location is the nucleus. Its function is as follows. May be involved in transcriptional regulation. This chain is Zinc finger protein 597 (ZNF597), found in Homo sapiens (Human).